Consider the following 257-residue polypeptide: Type III pantothenate kinase (257 aa).

6–13 (DCGNTNTV) is a binding site for ATP. Residue 107-110 (GPDR) coordinates substrate. The active-site Proton acceptor is the Asp109. Asp129 serves as a coordination point for K(+). Thr132 is an ATP binding site. Residue Thr184 participates in substrate binding.

This sequence belongs to the type III pantothenate kinase family. As to quaternary structure, homodimer. NH4(+) serves as cofactor. It depends on K(+) as a cofactor.

Its subcellular location is the cytoplasm. The enzyme catalyses (R)-pantothenate + ATP = (R)-4'-phosphopantothenate + ADP + H(+). It functions in the pathway cofactor biosynthesis; coenzyme A biosynthesis; CoA from (R)-pantothenate: step 1/5. In terms of biological role, catalyzes the phosphorylation of pantothenate (Pan), the first step in CoA biosynthesis. This is Type III pantothenate kinase from Cereibacter sphaeroides (strain ATCC 17029 / ATH 2.4.9) (Rhodobacter sphaeroides).